A 219-amino-acid polypeptide reads, in one-letter code: Adenylate kinase (219 aa).

10 to 15 (GAGKGT) contributes to the ATP binding site. The interval 30–59 (STGDMLRVAVKVGTPLGIEAKKIMDSGGLV) is NMP. AMP-binding positions include Thr31, Arg36, 57-59 (GLV), 85-88 (GFPR), and Gln92. An LID region spans residues 122 to 159 (GRRTHLKSGRTYHITYNQPKVEGIDDITGEKLVQRSDD). Residues Arg123 and 132-133 (TY) each bind ATP. Positions 156 and 167 each coordinate AMP. Gly202 serves as a coordination point for ATP.

Belongs to the adenylate kinase family. As to quaternary structure, monomer.

The protein localises to the cytoplasm. The enzyme catalyses AMP + ATP = 2 ADP. It functions in the pathway purine metabolism; AMP biosynthesis via salvage pathway; AMP from ADP: step 1/1. Functionally, catalyzes the reversible transfer of the terminal phosphate group between ATP and AMP. Plays an important role in cellular energy homeostasis and in adenine nucleotide metabolism. This chain is Adenylate kinase, found in Vesicomyosocius okutanii subsp. Calyptogena okutanii (strain HA).